Here is a 224-residue protein sequence, read N- to C-terminus: MAASRWLRAVLLFLCASDLLLLPPPNAYAADTPGEATPPPRKKKDIRDYNDADMARLLEQWEKDDDIEEGDLPEHKRPSAPIDFSKLDPGKPESILKMTKKGKTLMMFVTVSGNPTEKETEEITSLWQGSLFNANYDVQRFIVGSDRAIFMLRDGSYAWEIKDFLVSQDRCAEVTLEGQMYPGKGGGSKEKNKTKPEKAKKKEGDPKPRASKEDNRAGSRREDL.

The first 29 residues, Met-1–Ala-29, serve as a signal peptide directing secretion. The tract at residues Met-1–Gly-155 is chaperone domain. Disordered stretches follow at residues Tyr-28 to Tyr-49 and Gly-178 to Leu-224. Residues Ser-156–Lys-195 form an escort domain region. A compositionally biased stretch (basic and acidic residues) spans Gly-187–Leu-224. N-linked (GlcNAc...) asparagine glycosylation is present at Asn-192. Residues Arg-221–Leu-224 carry the Prevents secretion from ER motif.

It belongs to the MESD family. In terms of assembly, monomer. Interacts with LRP5; the interaction prevents LRP5 from forming aggregates and chaperones LRP6 to the plasma membrane. Interacts with LRP6; the interaction prevents LRP6 from forming aggregates and chaperones LRP6 to the plasma membrane. Interacts with LRP4; the interaction promotes glycosylation of LRP4 and its cell-surface expression. As to expression, expressed in many tissues, but not in skeletal muscles. In the retina expressed in retinal ganglion cells, inner and outer plexiform layers, photoreceptor inner and outer segments and retinal pigment epithelium (at protein level).

Its subcellular location is the endoplasmic reticulum. Its function is as follows. Chaperone specifically assisting the folding of beta-propeller/EGF modules within the family of low-density lipoprotein receptors (LDLRs). Acts as a modulator of the Wnt pathway through chaperoning the coreceptors of the canonical Wnt pathway, LRP5 and LRP6, to the plasma membrane. Essential for specification of embryonic polarity and mesoderm induction. Plays an essential role in neuromuscular junction (NMJ) formation by promoting cell-surface expression of LRP4. May regulate phagocytosis of apoptotic retinal pigment epithelium (RPE) cells. The protein is LRP chaperone MESD of Mus musculus (Mouse).